Reading from the N-terminus, the 551-residue chain is DNA mismatch repair protein MutL (551 aa).

This sequence belongs to the DNA mismatch repair MutL/HexB family.

Functionally, this protein is involved in the repair of mismatches in DNA. It is required for dam-dependent methyl-directed DNA mismatch repair. May act as a 'molecular matchmaker', a protein that promotes the formation of a stable complex between two or more DNA-binding proteins in an ATP-dependent manner without itself being part of a final effector complex. This Thermosipho melanesiensis (strain DSM 12029 / CIP 104789 / BI429) protein is DNA mismatch repair protein MutL.